Here is a 398-residue protein sequence, read N- to C-terminus: Acetate kinase (398 aa).

N10 provides a ligand contact to Mg(2+). Residue K17 participates in ATP binding. A substrate-binding site is contributed by R91. D148 (proton donor/acceptor) is an active-site residue. ATP contacts are provided by residues 208 to 212 (HLGNG), 283 to 285 (DCR), and 331 to 335 (GIGEN). E385 serves as a coordination point for Mg(2+).

The protein belongs to the acetokinase family. As to quaternary structure, homodimer. Requires Mg(2+) as cofactor. It depends on Mn(2+) as a cofactor.

Its subcellular location is the cytoplasm. The catalysed reaction is acetate + ATP = acetyl phosphate + ADP. Its pathway is metabolic intermediate biosynthesis; acetyl-CoA biosynthesis; acetyl-CoA from acetate: step 1/2. In terms of biological role, catalyzes the formation of acetyl phosphate from acetate and ATP. Can also catalyze the reverse reaction. In Shewanella pealeana (strain ATCC 700345 / ANG-SQ1), this protein is Acetate kinase.